We begin with the raw amino-acid sequence, 213 residues long: Neuroligin-4, X-linked (213 aa).

The tract at residues Phe1–Glu56 is disordered. Topologically, residues Phe1 to Ser73 are extracellular. A compositionally biased stretch (basic and acidic residues) spans His46 to Pro55. Residues Val74–Tyr94 traverse the membrane as a helical segment. Over Tyr95–Val213 the chain is Cytoplasmic. At Ser109 the chain carries Phosphoserine.

The protein belongs to the type-B carboxylesterase/lipase family. As to quaternary structure, homodimer. Interacts with NRXN1 in a calcium-dependent manner. Interaction with neurexins is mediated by heparan sulfate glycan modification on neurexin. Interacts through its C-terminus with DLG4/PSD-95 third PDZ domain.

It is found in the cell membrane. The protein localises to the postsynaptic density membrane. Its function is as follows. Cell surface protein involved in cell-cell-interactions via its interactions with neurexin family members. The chain is Neuroligin-4, X-linked (NLGN4X) from Macaca mulatta (Rhesus macaque).